A 387-amino-acid chain; its full sequence is Leucine aminopeptidase 1 (387 aa).

Residues 1–18 form the signal peptide; sequence MKIRAALALSATASGVLA. Residues 19-87 constitute a propeptide that is removed on maturation; that stretch reads AVVPQQALLN…YPTLHQASNV (69 aa). N-linked (GlcNAc...) asparagine glycosylation is present at Asn179. His187, Asp206, Glu245, and Asp272 together coordinate Zn(2+). Cys321 and Cys325 form a disulfide bridge. Residue His354 participates in Zn(2+) binding.

It belongs to the peptidase M28 family. M28E subfamily. As to quaternary structure, monomer. Requires Zn(2+) as cofactor.

Its subcellular location is the secreted. In terms of biological role, extracellular aminopeptidase that allows assimilation of proteinaceous substrates. The protein is Leucine aminopeptidase 1 (lap1) of Aspergillus oryzae (strain ATCC 42149 / RIB 40) (Yellow koji mold).